We begin with the raw amino-acid sequence, 500 residues long: MEDSSLPVVPAPIAAPGPAPSATAPRVPFHCSECGKSFRYRSDLRRHFARHTALKPHACPRCGKGFKHSFNLANHLRSHTGERPYRCSACPKGFRDSTGLLHHQVVHTGEKPYCCLVCELRFSSRSSLGRHLKRQHRGTLPSPLQPSPGLPPLSSPCSVCCNVGPCSVCGGGGSSGGEGLEGAGATSWGLAEAAAAAAASLPPFACGACARRFDHGRELAAHWAAHTDVKPFKCPRCERDFNAPALLERHKLTHDLQGSNAPPTQVWASGGGPEVAGEGDASEVGAAPQTWDAGLLLSPTGAGVPKLEALLPGDEGSGNDQAPAAAAEASSEDTLYQCDCGTFFASAPALASHLEAHSGPATYGCGHCGALYAALAALEEHRRASHGEGSGEAAPDGEGNQAAGGPGPGSSSRSKKIFGCSECEKLFRSPRDLERHVLVHTGEKPFPCLECGKFFRHECYLKRHRLLHGTERPFPCHICGKGFITLSNLSRHLKLHRGMD.

Met1 bears the N-acetylmethionine mark. Residues 1-24 (MEDSSLPVVPAPIAAPGPAPSATA) form a disordered region. A compositionally biased stretch (pro residues) spans 9-19 (VPAPIAAPGPA). 6 C2H2-type zinc fingers span residues 29–51 (FHCSECGKSFRYRSDLRRHFARH), 57–79 (HACPRCGKGFKHSFNLANHLRSH), 85–107 (YRCSACPKGFRDSTGLLHHQVVH), 113–136 (YCCLVCELRFSSRSSLGRHLKRQH), 204–226 (FACGACARRFDHGRELAAHWAAH), and 232–254 (FKCPRCERDFNAPALLERHKLTH). Disordered stretches follow at residues 255 to 284 (DLQGSNAPPTQVWASGGGPEVAGEGDASEV) and 306 to 328 (KLEALLPGDEGSGNDQAPAAAAE). The span at 256–267 (LQGSNAPPTQVW) shows a compositional bias: polar residues. 5 C2H2-type zinc fingers span residues 336 to 357 (YQCDCGTFFASAPALASHLEAH), 363 to 386 (YGCGHCGALYAALAALEEHRRASH), 418 to 440 (FGCSECEKLFRSPRDLERHVLVH), 446 to 468 (FPCLECGKFFRHECYLKRHRLLH), and 474 to 496 (FPCHICGKGFITLSNLSRHLKLH). A disordered region spans residues 383–415 (RASHGEGSGEAAPDGEGNQAAGGPGPGSSSRSK).

As to quaternary structure, interacts with FLT3 cytoplasmic catalytic domain, following receptor stimulation, in a kinase-independent manner. Does not interact with other structurally related receptor tyrosine kinases, including KIT, CSF1R and PDGFR. Interacts with NRL. In terms of tissue distribution, widely expressed. In the retina, highest expression in the ganglion cell layer.

It is found in the cytoplasm. The protein localises to the nucleus. Its function is as follows. May be a transcriptional repressor of NRL function in photoreceptors. Does not repress CRX-mediated transactivation. The sequence is that of Flt3-interacting zinc finger protein 1 (Fiz1) from Mus musculus (Mouse).